We begin with the raw amino-acid sequence, 129 residues long: Large ribosomal subunit protein bL21 (129 aa).

Residues 100-129 (DGAKPSKKAAEKKAPKAAPKKAAAKAESAE) form a disordered region.

This sequence belongs to the bacterial ribosomal protein bL21 family. Part of the 50S ribosomal subunit. Contacts protein L20.

This protein binds to 23S rRNA in the presence of protein L20. This is Large ribosomal subunit protein bL21 from Brucella anthropi (strain ATCC 49188 / DSM 6882 / CCUG 24695 / JCM 21032 / LMG 3331 / NBRC 15819 / NCTC 12168 / Alc 37) (Ochrobactrum anthropi).